Consider the following 73-residue polypeptide: Protein SlyX homolog (73 aa).

The disordered stretch occupies residues 54–73; it reads LQQAESNAPAAPANERPPHY. Over residues 57-67 the composition is skewed to low complexity; that stretch reads AESNAPAAPAN.

The protein belongs to the SlyX family.

The protein is Protein SlyX homolog of Rhodopseudomonas palustris (strain BisA53).